Here is a 314-residue protein sequence, read N- to C-terminus: Thymidylate synthase (314 aa).

DUMP is bound by residues arginine 21 and 176–177 (RR). Residue cysteine 196 is the Nucleophile of the active site. DUMP is bound by residues 216–219 (RSAD), asparagine 227, and 257–259 (HLY). Aspartate 219 lines the (6R)-5,10-methylene-5,6,7,8-tetrahydrofolate pocket. Residue serine 313 coordinates (6R)-5,10-methylene-5,6,7,8-tetrahydrofolate.

The protein belongs to the thymidylate synthase family. Bacterial-type ThyA subfamily. In terms of assembly, homodimer.

The protein localises to the cytoplasm. The enzyme catalyses dUMP + (6R)-5,10-methylene-5,6,7,8-tetrahydrofolate = 7,8-dihydrofolate + dTMP. It participates in pyrimidine metabolism; dTTP biosynthesis. Its function is as follows. Catalyzes the reductive methylation of 2'-deoxyuridine-5'-monophosphate (dUMP) to 2'-deoxythymidine-5'-monophosphate (dTMP) while utilizing 5,10-methylenetetrahydrofolate (mTHF) as the methyl donor and reductant in the reaction, yielding dihydrofolate (DHF) as a by-product. This enzymatic reaction provides an intracellular de novo source of dTMP, an essential precursor for DNA biosynthesis. The protein is Thymidylate synthase of Listeria monocytogenes serotype 4b (strain CLIP80459).